The chain runs to 349 residues: tRNA N6-adenosine threonylcarbamoyltransferase (349 aa).

Residues H114 and H118 each contribute to the Fe cation site. Residues 136 to 140 (IMSGG), D169, G182, and N280 contribute to the substrate site. Residue D308 participates in Fe cation binding.

The protein belongs to the KAE1 / TsaD family. Fe(2+) serves as cofactor.

The protein resides in the cytoplasm. It carries out the reaction L-threonylcarbamoyladenylate + adenosine(37) in tRNA = N(6)-L-threonylcarbamoyladenosine(37) in tRNA + AMP + H(+). Functionally, required for the formation of a threonylcarbamoyl group on adenosine at position 37 (t(6)A37) in tRNAs that read codons beginning with adenine. Is involved in the transfer of the threonylcarbamoyl moiety of threonylcarbamoyl-AMP (TC-AMP) to the N6 group of A37, together with TsaE and TsaB. TsaD likely plays a direct catalytic role in this reaction. The protein is tRNA N6-adenosine threonylcarbamoyltransferase of Ehrlichia chaffeensis (strain ATCC CRL-10679 / Arkansas).